We begin with the raw amino-acid sequence, 261 residues long: Prostatic glandular kallikrein-6 (261 aa).

Residues 1–18 (MWLLILFLILSLGWNDAA) form the signal peptide. Positions 19–24 (PPGQSR) are cleaved as a propeptide — activation peptide. Residues 25–258 (IIGGFNCEKN…FTSWMKKVMK (234 aa)) enclose the Peptidase S1 domain. Disulfide bonds link C31–C173, C50–C66, C152–C219, C184–C198, and C209–C234. The active-site Charge relay system is H65. A glycan (N-linked (GlcNAc...) asparagine) is linked at N108. D120 acts as the Charge relay system in catalysis. The active-site Charge relay system is S213.

This sequence belongs to the peptidase S1 family. Kallikrein subfamily.

The enzyme catalyses Preferential cleavage of Arg-|-Xaa bonds in small molecule substrates. Highly selective action to release kallidin (lysyl-bradykinin) from kininogen involves hydrolysis of Met-|-Xaa or Leu-|-Xaa.. Its function is as follows. Glandular kallikreins cleave Met-Lys and Arg-Ser bonds in kininogen to release Lys-bradykinin. In Rattus norvegicus (Rat), this protein is Prostatic glandular kallikrein-6 (Klk6).